Reading from the N-terminus, the 112-residue chain is Nitrogen regulatory protein P-II (112 aa).

The residue at position 51 (Tyr-51) is an O-UMP-tyrosine.

This sequence belongs to the P(II) protein family. As to quaternary structure, homotrimer.

Its function is as follows. In nitrogen-limiting conditions, when the ratio of Gln to 2-ketoglutarate decreases, P-II is uridylylated to P-II-UMP. P-II-UMP allows the deadenylation of glutamine synthetase (GS), thus activating the enzyme. Conversely, in nitrogen excess P-II is deuridylated and promotes the adenylation of GS. P-II indirectly controls the transcription of the GS gene (glnA). P-II prevents NR-II-catalyzed conversion of NR-I to NR-I-phosphate, the transcriptional activator of glnA. When P-II is uridylylated to P-II-UMP, these events are reversed. The sequence is that of Nitrogen regulatory protein P-II (glnB) from Klebsiella oxytoca.